A 1763-amino-acid polypeptide reads, in one-letter code: MSSRLRIPLWLLLPTTALVYFVTTVSTQITCRDCTNRGCFCVGEKGSMGIPGPQGPPGAQGIRGFPGPEGLPGPKGQKGSQGPPGPQGIKGDRGIIGVPGFPGNDGANGRPGEPGPPGAPGWDGCNGTDGAPGVPGLPGPPGMPGFPGPPGVPGMKGEPAIGYAGAPGEKGDAGMPGMPGLPGPPGRDGFPGEKGDRGDVGQAGPRGPPGEAGPPGNPGIGSIGPKGDPGEQGPRGPQGPPGPVPSTGAKGTIIGPEGAPGMKGEKGDPGEAGPRGFPGTPGVAGQPGLPGMKGEKGLSGPAGPRGKEGRPGLPGPPGFKGDRGLDGLPGVPGLPGQKGEAGFPGRDGAKGARGPPGPPGGGEFSDGPPGPPGLPGREGQPGPPGADGYPGPPGPQGPQGLPGGPGLPGLPGLEGLPGPKGEKGDSGIPGAPGVQGPPGLAGPPGAKGEPGPRGVDGQSIPGLPGKDGRPGLDGLPGRKGEMGLPGVRGPPGDSLNGLPGPPGPRGPQGPKGYDGRDGAPGLPGIPGPKGDRGGTCAFCAHGAKGEKGDAGYAGLPGPQGERGLPGIPGATGAPGDDGLPGAPGRPGPPGPPGQDGLPGLPGQKGEPTQLTLRPGPPGYPGQKGETGFPGPRGQEGLPGKPGIVGAPGLPGPPGPKGEPGLTGLPEKPGKDGIPGLPGLKGEPGYGQPGMPGLPGMKGDAGLPGLPGLPGAVGPMGPPVPESQLRPGPPGKDGLPGLPGPKGEAGFPGAPGLQGPAGLPGLPGMKGNPGLPGAPGLAGLPGIPGEKGIAGKPGLPGLTGAKGEAGYPGQPGLPGPKGEPGPSTTGPPGPPGFPGLKGKDGIPGAPGLPGLEGQRGLPGVPGQKGEIGLPGLAGAPGFPGAKGEPGLPGLPGKEGPQGPPGQPGAPGFPGQKGDEGLPGLPGVSGMKGDTGLPGVPGLAGPPGQPGFPGQKGQPGFPGVAGAKGEAGLPGLPGAPGQKGEQGLAGLPGIPGMKGAPGIPGAPGQDGLPGLPGVKGDRGFNGLPGEKGEPGPAARDGEKGEPGLPGQPGLRGPQGPPGLPGLPGLKGDEGQPGYGAPGLMGEKGLPGLPGKPGRPGAPGPKGLDGAPGFPGLKGEAGLPGAPGLPGQDGLPGLPGQKGESGFPGQPGLVGPPGLPGKMGAPGIRGEKGDAGLPGLPGERGLDGLPGQKGEAGFPGAPGLPGPVGPKGSAGAPGFPGLKGEPGLPGLEGQPGPRGMKGEAGLPGAPGRDGLPGLPGMKGEAGLPGLPGQPGKSITGPKGNAGLPGLPGKDGLPGLPGLKGEPGKPGYAGAAGIKGEPGLPGIPGAKGEPGLSGIPGKRGNDGIPGKPGPAGLPGLPGMKGESGLPGPQGPAGLPGLPGLKGEPGLPGFPGQKGETGFPGQPGIPGLPGMKGDSGYPGAPGRDGAPGKQGEPGPMGPPGAQPIVQRGEKGEMGPMGAPGIRGEKGLPGLDGLPGPSGPPGFAGAKGRDGFPGQPGMPGEKGAPGLPGFPGIEGIPGPPGLPGPSGPPGPPGPSYKDGFLLVKHSQTSEVPQCPPGMVKLWDGYSLLYIEGNEKSHNQDLGHAGSCLSRFSTMPFLFCDVNNVCNYASRNDKSYWLSTTAPIPMMPVSEGGIEPYISRCAVCEAPANVIAVHSQTIQIPNCPNGWNSLWIGYSFAMHTGAGAEGGGQSLSSPGSCLEDFRATPFIECNGARGTCHYFANKFSFWLTTIEDDQQFRIPESETLKAGSLRTRVSRCQVCIRSPDVQPYRG.

The N-terminal stretch at 1–26 is a signal peptide; that stretch reads MSSRLRIPLWLLLPTTALVYFVTTVS. Residues 27-42 are 7S domain; sequence TQITCRDCTNRGCFCV. Residues 43 to 1529 form a triple-helical region region; sequence GEKGSMGIPG…SGPPGPPGPS (1487 aa). 2 disordered regions span residues 51–529 and 550–1529; these read PGPQ…PGPK and AGYA…PGPS. Residues 72–81 show a composition bias toward low complexity; the sequence is PGPKGQKGSQ. Asn-126 carries N-linked (GlcNAc...) asparagine glycosylation. A compositionally biased stretch (pro residues) spans 135–152; that stretch reads PGLPGPPGMPGFPGPPGV. The span at 190–199 shows a compositional bias: basic and acidic residues; it reads FPGEKGDRGD. Positions 206–217 are enriched in pro residues; sequence RGPPGEAGPPGN. A compositionally biased stretch (low complexity) spans 225–235; it reads PKGDPGEQGPR. An O-linked (Xyl...) (glycosaminoglycan) serine glycan is attached at Ala-249. Low complexity predominate over residues 326–335; the sequence is DGLPGVPGLP. A compositionally biased stretch (gly residues) spans 400-409; the sequence is GLPGGPGLPG. Low complexity-rich tracts occupy residues 410-419 and 428-453; these read LPGLEGLPGP and IPGA…PGPR. Over residues 466-481 the composition is skewed to basic and acidic residues; sequence KDGRPGLDGLPGRKGE. Low complexity predominate over residues 564 to 582; it reads LPGIPGATGAPGDDGLPGA. Residues 583–592 are compositionally biased toward pro residues; the sequence is PGRPGPPGPP. Low complexity-rich tracts occupy residues 699 to 714 and 731 to 783; these read DAGL…AVGP and KDGL…PGIP. The span at 810-832 shows a compositional bias: pro residues; that stretch reads PGLPGPKGEPGPSTTGPPGPPGF. 10 stretches are compositionally biased toward low complexity: residues 865 to 895, 946 to 977, 1040 to 1051, 1077 to 1086, 1108 to 1146, 1210 to 1231, 1280 to 1296, 1367 to 1386, 1462 to 1480, and 1499 to 1510; these read EIGL…KEGP, FPGQ…PGQK, PGLPGQPGLRGP, LMGEKGLPGL, PGLK…QPGL, PGFP…PGPR, LPGL…PGLK, PAGL…PGFP, LPGL…FAGA, and PGLPGFPGIEGI. The segment covering 1511-1528 has biased composition (pro residues); that stretch reads PGPPGLPGPSGPPGPPGP. In terms of domain architecture, Collagen IV NC1 spans 1533–1756; the sequence is GFLLVKHSQT…SRCQVCIRSP (224 aa). Disulfide bonds link Cys-1548/Cys-1637, Cys-1581/Cys-1634, Cys-1593/Cys-1599, Cys-1656/Cys-1752, Cys-1690/Cys-1749, and Cys-1702/Cys-1709.

Belongs to the type IV collagen family. In terms of assembly, trimers of two alpha 1(IV) and one alpha 2(IV) chain. Type IV collagen forms a mesh-like network linked through intermolecular interactions between 7S domains and between NC1 domains. Post-translationally, prolines at the third position of the tripeptide repeating unit (G-X-Y) are hydroxylated in some or all of the chains. In terms of processing, type IV collagens contain numerous cysteine residues which are involved in inter- and intramolecular disulfide bonding. 12 of these, located in the NC1 domain, are conserved in all known type IV collagens. The trimeric structure of the NC1 domains is stabilized by covalent bonds between Lys and Met residues.

It is found in the secreted. Its subcellular location is the extracellular space. The protein localises to the extracellular matrix. The protein resides in the basement membrane. In terms of biological role, collagen type IV is specific for basement membranes. This chain is Collagen alpha-2(IV) chain, found in Ascaris suum (Pig roundworm).